A 286-amino-acid chain; its full sequence is Bark leucoagglutinin (286 aa).

Positions 1–28 (ATSNSKPTQVLLATFLTFFFLLLNNVNS) are cleaved as a signal peptide. Residue Y73 participates in N-acetyl-alpha-neuraminyl-(2-&gt;3)-beta-D-galactosyl-(1-&gt;4)-beta-D-glucose binding. An N-linked (GlcNAc...) asparagine glycan is attached at N89. N-acetyl-alpha-neuraminyl-(2-&gt;3)-beta-D-galactosyl-(1-&gt;4)-beta-D-glucose-binding residues include D115 and K135. An N-linked (GlcNAc...) asparagine glycan is attached at N141. Residues E155 and D157 each coordinate Mn(2+). Ca(2+)-binding residues include D157, Y159, D165, and D168. Residues Y159 and D165 each contribute to the N-acetyl-alpha-neuraminyl-(2-&gt;3)-beta-D-galactosyl-(1-&gt;4)-beta-D-glucose site. Mn(2+) is bound by residues D168 and H173. N207 and N219 each carry an N-linked (GlcNAc...) asparagine glycan. The propeptide at 278 to 286 (NVHIARYTA) is removed in mature form.

It belongs to the leguminous lectin family.

Its function is as follows. Sialic acid-binding lectin specifically recognizing the trisaccharide sequence Neu5Ac/Gc-alpha-2,3-Gal-beta-1,4-GlcNAc/Glc. In Maackia amurensis (Amur maackia), this protein is Bark leucoagglutinin.